Here is an 877-residue protein sequence, read N- to C-terminus: DNA polymerase I (877 aa).

Residues 1–310 (MKKKLVLIDG…FTLADRVTEE (310 aa)) enclose the 5'-3' exonuclease domain. Residues 311-465 (MLADKAALVV…ALERPFLDEL (155 aa)) form the 3'-5' exonuclease domain. Residues 469-877 (EQDRLLVELE…HYGSTWYDAK (409 aa)) are polymerase.

The protein belongs to the DNA polymerase type-A family. As to quaternary structure, single-chain monomer with multiple functions.

The catalysed reaction is DNA(n) + a 2'-deoxyribonucleoside 5'-triphosphate = DNA(n+1) + diphosphate. In terms of biological role, in addition to polymerase activity, this DNA polymerase exhibits 3'-5' and 5'-3' exonuclease activity. The sequence is that of DNA polymerase I (polA) from Bacillus caldotenax.